Here is a 135-residue protein sequence, read N- to C-terminus: Race-specific elicitor A4 (135 aa).

Residues 1 to 18 (MHYTTLLLSTLLVGTALA) form the signal peptide. Residues 19–29 (QPTNPPAKTPK) constitute a propeptide that is removed on maturation. Positions 19–39 (QPTNPPAKTPKKAPKTQPYNP) are disordered. The 65-residue stretch at 47-111 (DTKCMGPKDC…DYPNLSTCPV (65 aa)) folds into the Chitin-binding type-2 domain. A disulfide bridge connects residues cysteine 86 and cysteine 101. Positions 112 to 135 (KTPQPKPKKGGVGGKKASVGHPGY) are disordered.

In terms of biological role, this necrosis-inducing peptide induces a hypersensitive response on Cf-4 tomato genotypes. Race-specific elicitors are compounds which only induce defense responses in genotypes of host plants which are resistant to the pathogenic race that produces the elicitor, but not in susceptible genotypes. The sequence is that of Race-specific elicitor A4 (AVR4) from Passalora fulva (Tomato leaf mold).